Here is a 146-residue protein sequence, read N- to C-terminus: 3-dehydroquinate dehydratase (146 aa).

The active-site Proton acceptor is tyrosine 23. Residues asparagine 74, histidine 80, and aspartate 87 each coordinate substrate. The active-site Proton donor is the histidine 100. Residues 101 to 102 (IS) and arginine 111 contribute to the substrate site.

This sequence belongs to the type-II 3-dehydroquinase family. In terms of assembly, homododecamer.

It carries out the reaction 3-dehydroquinate = 3-dehydroshikimate + H2O. It participates in metabolic intermediate biosynthesis; chorismate biosynthesis; chorismate from D-erythrose 4-phosphate and phosphoenolpyruvate: step 3/7. In terms of biological role, catalyzes a trans-dehydration via an enolate intermediate. This chain is 3-dehydroquinate dehydratase, found in Bacillus cereus (strain AH820).